Consider the following 141-residue polypeptide: Large ribosomal subunit protein uL11 (141 aa).

This sequence belongs to the universal ribosomal protein uL11 family. Part of the ribosomal stalk of the 50S ribosomal subunit. Interacts with L10 and the large rRNA to form the base of the stalk. L10 forms an elongated spine to which L12 dimers bind in a sequential fashion forming a multimeric L10(L12)X complex. Post-translationally, one or more lysine residues are methylated.

In terms of biological role, forms part of the ribosomal stalk which helps the ribosome interact with GTP-bound translation factors. The chain is Large ribosomal subunit protein uL11 from Chloroherpeton thalassium (strain ATCC 35110 / GB-78).